The sequence spans 117 residues: Immunoglobulin lambda variable 1-47 (117 aa).

Residues 1–19 form the signal peptide; the sequence is MAGFPLLLTLLTHCAGSWA. Q20 carries the pyrrolidone carboxylic acid modification. A framework-1 region spans residues 20–44; sequence QSVLTQPPSASGTPGQRVTISCSGS. The region spanning 20 to 117 is the Ig-like domain; it reads QSVLTQPPSA…CAAWDDSLSG (98 aa). C41 and C108 are oxidised to a cystine. A complementarity-determining-1 region spans residues 45–52; sequence SSNIGSNY. The interval 53–69 is framework-2; the sequence is VYWYQQLPGTAPKLLIY. The interval 70–72 is complementarity-determining-2; sequence SNN. The tract at residues 73 to 108 is framework-3; it reads QRPSGVPDRFSGSKSGTSASLAISGLRSEDEADYYC. The interval 109–117 is complementarity-determining-3; that stretch reads AAWDDSLSG.

Immunoglobulins are composed of two identical heavy chains and two identical light chains; disulfide-linked.

It localises to the secreted. The protein localises to the cell membrane. In terms of biological role, v region of the variable domain of immunoglobulin light chains that participates in the antigen recognition. Immunoglobulins, also known as antibodies, are membrane-bound or secreted glycoproteins produced by B lymphocytes. In the recognition phase of humoral immunity, the membrane-bound immunoglobulins serve as receptors which, upon binding of a specific antigen, trigger the clonal expansion and differentiation of B lymphocytes into immunoglobulins-secreting plasma cells. Secreted immunoglobulins mediate the effector phase of humoral immunity, which results in the elimination of bound antigens. The antigen binding site is formed by the variable domain of one heavy chain, together with that of its associated light chain. Thus, each immunoglobulin has two antigen binding sites with remarkable affinity for a particular antigen. The variable domains are assembled by a process called V-(D)-J rearrangement and can then be subjected to somatic hypermutations which, after exposure to antigen and selection, allow affinity maturation for a particular antigen. The sequence is that of Immunoglobulin lambda variable 1-47 from Homo sapiens (Human).